Consider the following 691-residue polypeptide: Lacticin-481/lactococcin-DR transport/processing ATP-binding protein lcnDR3 (691 aa).

A Peptidase C39 domain is found at 6–130 (QNNEQDCLLA…KKFSGYIITL (125 aa)). C12 is an active-site residue. The ABC transmembrane type-1 domain occupies 158 to 434 (TFLYIFSLFI…IQDVMFEISR (277 aa)). A run of 5 helical transmembrane segments spans residues 159 to 179 (FLYIFSLFISQIVALWFSIIL), 189 to 209 (ITYSFIMMISLVLFQTLSLLM), 262 to 284 (GILLKIFPSLLNFFTVFIVIIYL), 289 to 311 (FTLTLFLVIMNLLYMIFSFSLIS), and 385 to 405 (ICVILMMIFGIYLNQGNLVSI). One can recognise an ABC transporter domain in the interval 464–689 (IILKDISYSY…LLNDSYNSFV (226 aa)). 497–504 (GKSGSGKS) contacts ATP.

Belongs to the ABC transporter superfamily.

It is found in the cell membrane. Functionally, probably implicated in the export process of the lantibiotic lacticin-481/lactococcin-DR. The polypeptide is Lacticin-481/lactococcin-DR transport/processing ATP-binding protein lcnDR3 (lcnDR3) (Lactococcus lactis subsp. lactis (Streptococcus lactis)).